A 215-amino-acid polypeptide reads, in one-letter code: Ribosomal RNA small subunit methyltransferase G (215 aa).

S-adenosyl-L-methionine-binding positions include Gly-73, Leu-78, 125 to 126, and Arg-140; that span reads AE.

This sequence belongs to the methyltransferase superfamily. RNA methyltransferase RsmG family.

The protein localises to the cytoplasm. Its function is as follows. Specifically methylates the N7 position of guanine in position 518 of 16S rRNA. The chain is Ribosomal RNA small subunit methyltransferase G from Renibacterium salmoninarum (strain ATCC 33209 / DSM 20767 / JCM 11484 / NBRC 15589 / NCIMB 2235).